The primary structure comprises 245 residues: uncharacterized protein (245 aa).

Transmembrane regions (helical) follow at residues 29 to 51 (LVVL…RIGM) and 61 to 83 (TILF…LMLH).

The protein localises to the cell membrane. This is an uncharacterized protein from Treponema pallidum (strain Nichols).